A 190-amino-acid chain; its full sequence is Molybdenum cofactor guanylyltransferase (190 aa).

GTP contacts are provided by residues 10-12 (LAG), Lys23, Asn51, Asp69, and Asp99. Asp99 provides a ligand contact to Mg(2+).

Belongs to the MobA family. As to quaternary structure, monomer. The cofactor is Mg(2+).

It localises to the cytoplasm. It catalyses the reaction Mo-molybdopterin + GTP + H(+) = Mo-molybdopterin guanine dinucleotide + diphosphate. In terms of biological role, transfers a GMP moiety from GTP to Mo-molybdopterin (Mo-MPT) cofactor (Moco or molybdenum cofactor) to form Mo-molybdopterin guanine dinucleotide (Mo-MGD) cofactor. This Mannheimia succiniciproducens (strain KCTC 0769BP / MBEL55E) protein is Molybdenum cofactor guanylyltransferase.